Reading from the N-terminus, the 139-residue chain is Large ribosomal subunit protein bL17 (139 aa).

Positions 120–139 are disordered; it reads ESAKGQDSGPVHVEGDEEAA.

Belongs to the bacterial ribosomal protein bL17 family. Part of the 50S ribosomal subunit. Contacts protein L32.

The polypeptide is Large ribosomal subunit protein bL17 (Parvibaculum lavamentivorans (strain DS-1 / DSM 13023 / NCIMB 13966)).